The sequence spans 195 residues: GTP cyclohydrolase 1 (195 aa).

C85, H88, and C157 together coordinate Zn(2+).

This sequence belongs to the GTP cyclohydrolase I family. As to quaternary structure, toroid-shaped homodecamer, composed of two pentamers of five dimers.

It carries out the reaction GTP + H2O = 7,8-dihydroneopterin 3'-triphosphate + formate + H(+). The protein operates within cofactor biosynthesis; 7,8-dihydroneopterin triphosphate biosynthesis; 7,8-dihydroneopterin triphosphate from GTP: step 1/1. The sequence is that of GTP cyclohydrolase 1 from Clostridium acetobutylicum (strain ATCC 824 / DSM 792 / JCM 1419 / IAM 19013 / LMG 5710 / NBRC 13948 / NRRL B-527 / VKM B-1787 / 2291 / W).